The sequence spans 48 residues: 2-deoxy-glucose resistant protein 1, mitochondrial (48 aa).

Residues 1–28 (MQVGFVSQTNCRSFPACIVFLFQMSQRQ) constitute a mitochondrion transit peptide.

It localises to the mitochondrion. The protein is 2-deoxy-glucose resistant protein 1, mitochondrial (DGR1) of Saccharomyces cerevisiae (strain ATCC 204508 / S288c) (Baker's yeast).